A 115-amino-acid polypeptide reads, in one-letter code: UPF0102 protein NMCC_2054 (115 aa).

Belongs to the UPF0102 family.

The chain is UPF0102 protein NMCC_2054 from Neisseria meningitidis serogroup C (strain 053442).